A 524-amino-acid polypeptide reads, in one-letter code: Inosine-5'-monophosphate dehydrogenase (524 aa).

2 consecutive CBS domains span residues 121–180 (FILD…NTPV) and 184–242 (MTPR…PLAS). NAD(+)-binding positions include 280-282 (DSS) and 330-332 (GMG). K(+) contacts are provided by G332 and G334. S335 serves as a coordination point for IMP. C337 is a binding site for K(+). The active-site Thioimidate intermediate is the C337. IMP-binding positions include 370-372 (DGG), 393-394 (GG), and 417-421 (YRGMG). Catalysis depends on R439, which acts as the Proton acceptor. Q451 lines the IMP pocket. Residues E510 and G511 each coordinate K(+).

The protein belongs to the IMPDH/GMPR family. Homotetramer. K(+) is required as a cofactor.

It is found in the cytoplasm. It catalyses the reaction IMP + NAD(+) + H2O = XMP + NADH + H(+). Its pathway is purine metabolism; XMP biosynthesis via de novo pathway; XMP from IMP: step 1/1. With respect to regulation, mycophenolic acid (MPA) is a non-competitive inhibitor that prevents formation of the closed enzyme conformation by binding to the same site as the amobile flap. In contrast, mizoribine monophosphate (MZP) is a competitive inhibitor that induces the closed conformation. MPA is a potent inhibitor of mammalian IMPDHs but a poor inhibitor of the bacterial enzymes. MZP is a more potent inhibitor of bacterial IMPDH. Catalyzes the conversion of inosine 5'-phosphate (IMP) to xanthosine 5'-phosphate (XMP), the first committed and rate-limiting step in the de novo synthesis of guanine nucleotides, and therefore plays an important role in the regulation of cell growth. The chain is Inosine-5'-monophosphate dehydrogenase (gua1) from Schizosaccharomyces pombe (strain 972 / ATCC 24843) (Fission yeast).